The following is a 1026-amino-acid chain: Glutactin (1026 aa).

An N-terminal signal peptide occupies residues 1–17 (MKPLLLVLALCGAQVHA). 2 positions are modified to sulfotyrosine: Tyr-26 and Tyr-29. Asn-115 carries an N-linked (GlcNAc...) asparagine glycan. A disulfide bridge links Cys-123 with Cys-145. Tyr-182 carries the post-translational modification Sulfotyrosine. Cys-298 and Cys-316 form a disulfide bridge. 2 N-linked (GlcNAc...) asparagine glycosylation sites follow: Asn-368 and Asn-402. The residue at position 559 (Tyr-559) is a Sulfotyrosine. The interval 601–641 (PITTTTTTTTTTTTTSRPYAYNPYANWQNRPSQQHPNWHPA) is disordered. Low complexity predominate over residues 603–615 (TTTTTTTTTTTTT). Positions 625–636 (ANWQNRPSQQHP) are enriched in polar residues. Position 645 is a sulfotyrosine (Tyr-645). Disordered regions lie at residues 659 to 695 (EREQ…REQE) and 723 to 1026 (EREQ…NSRN). Over residues 723-752 (EREQYEREQQEREQREREELERQQREREQQ) the composition is skewed to basic and acidic residues. Tyr-727 bears the Sulfotyrosine mark. Asn-810 is a glycosylation site (N-linked (GlcNAc...) asparagine). Residues 811–854 (FSEEDREQQQQEQLRREQQEQQEREYQLQLEREQQEREQQERGQ) are compositionally biased toward basic and acidic residues. Sulfotyrosine is present on residues Tyr-836, Tyr-862, Tyr-865, Tyr-868, Tyr-922, and Tyr-928. The span at 855 to 866 (QEPGPEEYPSYE) shows a compositional bias: low complexity. Positions 867 to 893 (EYSRALQEKNAERDRIYAEEQERERQQ) are enriched in basic and acidic residues. A compositionally biased stretch (basic and acidic residues) spans 923 to 944 (DGDRSYAEEQEREQQRRDQVEQ). Residues 945-969 (EREEQPDEDQGEEYERSPDEEEAAE) are compositionally biased toward acidic residues. Sulfotyrosine occurs at positions 981, 984, and 1006. The span at 1002–1026 (EEERYRAQQEEEDRIQAERERNSRN) shows a compositional bias: basic and acidic residues.

This sequence in the N-terminal section; belongs to the type-B carboxylesterase/lipase family. Extensively O-glycosylated and also N-glycosylated. In terms of processing, about four tyrosines are sulfated.

The protein resides in the secreted. It is found in the extracellular space. It localises to the extracellular matrix. Its subcellular location is the basement membrane. In terms of biological role, not known. Binds calcium ions. In Drosophila melanogaster (Fruit fly), this protein is Glutactin (Glt).